The primary structure comprises 188 residues: Large ribosomal subunit protein uL6 (188 aa).

This sequence belongs to the universal ribosomal protein uL6 family.

The chain is Large ribosomal subunit protein uL6 (RPL9) from Tetrahymena thermophila (strain SB210).